A 22-amino-acid chain; its full sequence is Antimicrobial peptide 5 (22 aa).

The residue at position 22 (Leu22) is a Leucine amide.

As to expression, skin.

It localises to the secreted. Functionally, has very strong antimicrobial activity against Gram-positive bacterium S.aureus, Gram-negative bacterium E.coli and yeast C.albicans. Has strong hemolytic activity against human red blood cells. This chain is Antimicrobial peptide 5, found in Xenopus tropicalis (Western clawed frog).